A 438-amino-acid chain; its full sequence is Ubiquitin carboxyl-terminal hydrolase 27 (438 aa).

Residues 78-421 (RGLINLGNTC…EGYLLFYHKQ (344 aa)) form the USP domain. The active-site Nucleophile is the Cys87. Residue His380 is the Proton acceptor of the active site.

Belongs to the peptidase C19 family. In terms of assembly, interacts with phosphorylated BCL2L11 isoform BIMEL; this interaction leads to BCL2L11 deubiquitination and stabilization.

It localises to the cytoplasm. The protein localises to the cytosol. Its subcellular location is the nucleus. It carries out the reaction Thiol-dependent hydrolysis of ester, thioester, amide, peptide and isopeptide bonds formed by the C-terminal Gly of ubiquitin (a 76-residue protein attached to proteins as an intracellular targeting signal).. Deubiquitinase involved in innate antiviral immunity by mediating deubiquitination of CGAS and RIGI. Negatively regulates RIGI by mediating 'Lys-63'-linked deubiquitination of RIGI, inhibiting type I interferon signaling. Also regulates 'Lys-63'-linked ubiquitination level of MDA5/IFIH1. Acts as a positive regulator of the cGAS-STING pathway by catalyzing 'Lys-48'-linked deubiquitination of CGAS, thereby promoting its stabilization. Can reduce the levels of BCL2L11/BIM ubiquitination and stabilize BCL2L11 in response to the RAF-MAPK-degradation signal. By acting on BCL2L11 levels, may counteract the anti-apoptotic effects of MAPK activity. The polypeptide is Ubiquitin carboxyl-terminal hydrolase 27 (Homo sapiens (Human)).